A 110-amino-acid chain; its full sequence is uncharacterized protein (110 aa).

This is an uncharacterized protein from Schizosaccharomyces pombe (strain 972 / ATCC 24843) (Fission yeast).